We begin with the raw amino-acid sequence, 72 residues long: Small proline-rich protein 2B (72 aa).

A compositionally biased stretch (low complexity) spans 1-11; sequence MSYQQQQCKQP. Residues 1–20 are disordered; sequence MSYQQQQCKQPCQPPPVCPT. A run of 3 repeats spans residues 21–29, 30–38, and 39–47. The segment at 21–47 is 3 X 9 AA tandem repeats of P-K-C-P-[EQ]-P-C-P-P; it reads PKCPEPCPPPKCPEPCPPPKCPQPCPP. The disordered stretch occupies residues 42–72; it reads PQPCPPQQCQQKYPPVTPSPPCQPKYPPKSK. Residues 56 to 72 show a composition bias toward pro residues; sequence PVTPSPPCQPKYPPKSK.

Belongs to the cornifin (SPRR) family. Suprabasal layers of squamous-differentiated tissues such as epidermis, esophagus, tongue and trachea.

The protein resides in the cytoplasm. Its function is as follows. Cross-linked envelope protein of keratinocytes. It is a keratinocyte protein that first appears in the cell cytosol, but ultimately becomes cross-linked to membrane proteins by transglutaminase. All that results in the formation of an insoluble envelope beneath the plasma membrane. The polypeptide is Small proline-rich protein 2B (SPRR2B) (Homo sapiens (Human)).